The primary structure comprises 238 residues: Histidine/lysine/arginine/ornithine transport system permease protein HisM (238 aa).

Residues 1–26 (MIEILHEYWKPLLWTDGYRFTGVAIT) lie on the Periplasmic side of the membrane. The 199-residue stretch at 23-221 (VAITLWLLIL…IISYVLISLF (199 aa)) folds into the ABC transmembrane type-1 domain. The helical transmembrane segment at 27 to 47 (LWLLILSVVIGGVLALFLAIG) threads the bilayer. At 48 to 58 (RVSSNKYIQFP) the chain is on the cytoplasmic side. A helical membrane pass occupies residues 59–79 (IWLFTYIFRGTPLYVQLLVFY). Residues 80-104 (SGMYTLEIVKGTEFLNAFFRSGLNC) are Periplasmic-facing. Residues 105 to 125 (TVLALTLNTCAYTTEIFAGAI) form a helical membrane-spanning segment. At 126–157 (RSVPHGEIEAARAYGFSTFKMYRCIILPSALR) the chain is on the cytoplasmic side. The helical transmembrane segment at 158 to 178 (IALPAYSNEVILMLHSTALAF) threads the bilayer. At 179-199 (TATVPDLLKIARDINAATYQP) the chain is on the periplasmic side. The helical transmembrane segment at 200–220 (FTAFGIAAVLYLIISYVLISL) threads the bilayer. Residues 221–238 (FRRAEKRWLQHVKPSSTH) are Cytoplasmic-facing.

This sequence belongs to the binding-protein-dependent transport system permease family. HisMQ subfamily. The HisPMQJ complex is composed of two ATP-binding proteins (HisP), two transmembrane proteins (HisM and HisQ) and a solute-binding protein (HisJ). The HisPMQ-ArgT complex is composed of two ATP-binding proteins (HisP), two transmembrane proteins (HisM and HisQ) and a solute-binding protein (ArgT).

Its subcellular location is the cell inner membrane. Functionally, part of the ABC transporter complex HisPMQJ involved in histidine transport. Is also part of the ABC transporter complex HisPMQ-ArgT involved in lysine/arginine/ornithine transport. Probably responsible for the translocation of the substrate across the membrane. This is Histidine/lysine/arginine/ornithine transport system permease protein HisM (hisM) from Escherichia coli O157:H7.